We begin with the raw amino-acid sequence, 157 residues long: MSYTVSSANQLVYLGSVWADPLELQNLCTSALGNQFQTQQARTTVQQQFSDVWKTIPTATVRFPATGFKVFRYNAVLDSLVSALLGAFDTRNRIIEVENPQNPTTAETLDATRRVDDATVAIRASISNLMNELVRGTGMYNQALFESASGLTWATTP.

S2 carries the post-translational modification N-acetylserine; by host.

Belongs to the virgaviridae capsid protein family.

The protein localises to the virion. In terms of biological role, capsid protein self-assembles to form rod-shaped virions about 18 nm in diameter with a central canal enclosing the viral genomic RNA. This chain is Capsid protein (CP), found in Tomato mosaic virus (strain Korean) (ToMV).